Consider the following 588-residue polypeptide: Myc box-dependent-interacting protein 1 (588 aa).

Ala2 is subject to N-acetylalanine. An interaction with BIN2 region spans residues 2-122 (AEMGSKGVTA…DYHQKLVDQA (121 aa)). Coiled coils occupy residues 15 to 42 (ASNV…TKDE) and 193 to 274 (HLVA…EKQH). In terms of domain architecture, BAR spans 29 to 276 (VLQKLGKADE…LVSLEKQHGS (248 aa)). The segment at 279–355 (FTVKAQPSDN…PKHTPSKEMK (77 aa)) is disordered. 3 positions are modified to phosphoserine: Ser296, Ser298, and Ser304. Thr308 is modified (phosphothreonine). Residues Ser324 and Ser332 each carry the phosphoserine modification. Positions 379–422 (FEAPGPFSEQASLLDLDFEPLPPVASPVKAPTPSGQSIPWDLWE) are clathrin-binding. Positions 448 to 484 (PSQTAEPGPAQPAEASEVVGGAQEPGETAASEATSSS) are disordered. Over residues 474-484 (ETAASEATSSS) the composition is skewed to low complexity. Residues 515 to 588 (GFMFKVQAQH…FPENFTERVQ (74 aa)) form the SH3 domain.

Heterodimer with AMPH. Binds SH3GLB1. Interacts (via SH3 domain) with DNM1. Interacts with SYNJ1. Interacts (via SH3 domain) with DNM2. Interacts with CLTC. Interacts with AP2A2. Interacts with AP2B1. Interacts with MYC (via N-terminal transactivation domain); the interaction requires the integrity of the conserved MYC box regions 1 and 2. Interacts with BIN2. Interacts with SNX4. Interacts (via BAR domain) with BACE1. Binds (via BAR domain) F-actin. In terms of processing, phosphorylated by protein kinase C. Isoform 1 is expressed mainly in the brain. Isoform 2 is widely expressed.

The protein localises to the nucleus. It localises to the cytoplasm. It is found in the endosome. Its subcellular location is the cell membrane. The protein resides in the sarcolemma. The protein localises to the T-tubule. Functionally, is a key player in the control of plasma membrane curvature, and membrane shaping and remodeling. Required in muscle cells for the formation of T-tubules, tubular invaginations of the plasma membrane that function in depolarization-contraction coupling. Required in muscle cells for the formation of T-tubules, tubular invaginations of the plasma membrane that function in depolarization-contraction coupling. Is a negative regulator of endocytosis. Is also involved in the regulation of intracellular vesicles sorting, modulation of BACE1 trafficking and the control of amyloid-beta production. In neuronal circuits, endocytosis regulation may influence the internalization of PHF-tau aggregates. May be involved in the regulation of MYC activity and the control cell proliferation. The polypeptide is Myc box-dependent-interacting protein 1 (Bin1) (Mus musculus (Mouse)).